Consider the following 134-residue polypeptide: Thioredoxin-like protein Clot (134 aa).

The 134-residue stretch at 1–134 (MTLKKVDANP…LILPLLAPST (134 aa)) folds into the Thioredoxin domain. Catalysis depends on nucleophile residues C48 and C51. C48 and C51 are joined by a disulfide.

It belongs to the thioredoxin family.

Functionally, probable thiol-disulfide oxidoreductase that may participate in various redox reactions. The chain is Thioredoxin-like protein Clot from Arabidopsis thaliana (Mouse-ear cress).